The sequence spans 461 residues: Vitamin K-dependent protein C (461 aa).

Positions 1 to 18 (MWQFRIFLLFASTWGISG) are cleaved as a signal peptide. The propeptide occupies 19–41 (VSAHPDPVFSSSEGAHQVLRVRR). Residues 42 to 87 (ANSFLEEVRAGSLERECMEEICDFEEAQEIFQNVEDTLAFWIKYFD) enclose the Gla domain. 10 positions are modified to 4-carboxyglutamate: glutamate 47, glutamate 48, glutamate 55, glutamate 57, glutamate 60, glutamate 61, glutamate 66, glutamate 67, glutamate 70, and glutamate 76. Cysteine 58 and cysteine 63 are oxidised to a cystine. Disulfide bonds link cysteine 91-cysteine 110, cysteine 100-cysteine 105, cysteine 104-cysteine 119, cysteine 121-cysteine 130, cysteine 139-cysteine 150, cysteine 146-cysteine 159, cysteine 161-cysteine 174, cysteine 182-cysteine 320, and cysteine 239-cysteine 255. 2 EGF-like domains span residues 96–131 (LDHQ…RFCQ) and 135–175 (GFQD…MHCR). A (3R)-3-hydroxyaspartate modification is found at aspartate 112. Positions 213–450 (IVNGTLTKQG…YLKWIHSYIG (238 aa)) constitute a Peptidase S1 domain. N-linked (GlcNAc...) asparagine glycosylation is present at asparagine 215. The Charge relay system role is filled by histidine 254. N-linked (GlcNAc...) asparagine glycosylation is present at asparagine 291. Aspartate 300 acts as the Charge relay system in catalysis. The N-linked (GlcNAc...) asparagine glycan is linked to asparagine 355. 2 cysteine pairs are disulfide-bonded: cysteine 373–cysteine 387 and cysteine 398–cysteine 426. Serine 402 functions as the Charge relay system in the catalytic mechanism.

Belongs to the peptidase S1 family. As to quaternary structure, synthesized as a single chain precursor, which is cleaved into a light chain and a heavy chain held together by a disulfide bond. The enzyme is then activated by thrombin, which cleaves a tetradecapeptide from the amino end of the heavy chain; this reaction, which occurs at the surface of endothelial cells, is strongly promoted by thrombomodulin. In terms of processing, the vitamin K-dependent, enzymatic carboxylation of some Glu residues allows the modified protein to bind calcium. The iron and 2-oxoglutarate dependent 3-hydroxylation of aspartate and asparagine is (R) stereospecific within EGF domains. Plasma; synthesized in the liver.

It is found in the secreted. The protein resides in the golgi apparatus. The protein localises to the endoplasmic reticulum. The enzyme catalyses Degradation of blood coagulation factors Va and VIIIa.. In terms of biological role, protein C is a vitamin K-dependent serine protease that regulates blood coagulation by inactivating factors Va and VIIIa in the presence of calcium ions and phospholipids. Exerts a protective effect on the endothelial cell barrier function. The protein is Vitamin K-dependent protein C (Proc) of Rattus norvegicus (Rat).